The primary structure comprises 238 residues: Small ribosomal subunit protein eS4 (238 aa).

The S4 RNA-binding domain occupies 38–110 (LPLAIIIRDV…EKKYYALIPI (73 aa)).

It belongs to the eukaryotic ribosomal protein eS4 family.

In Pyrobaculum islandicum (strain DSM 4184 / JCM 9189 / GEO3), this protein is Small ribosomal subunit protein eS4.